The sequence spans 392 residues: MTLAAITYTRGSLSILNQLLLPHQTTYDPLHSACDAWHAIHEMRVRGAPAIAIVAALSLAVELDALAANNQLSPEPKEVEVFIREKLEYLVSSRPTAVNLAEAAGRLGGIVSAKAEVRGVDGREVAEAYIAAAQRMLEDDVKDNRAIGEFGARWVLENAVATGSESGSEKGKVAVLTHCNTGSLATAGYGTALGVIRSLHATGSLERAYCTETRPYNQGSRLTAYELVHDKIPATLITDNMAAALLARNRAGSAASVGVSAIIVGADRVAANGDTANKIGTYGLAVLAKYHGVKFLVAAPRTTIDMNTKTGADIVIEERPKQEVTRVRGPRAGEEVDGLRAMETITVAANGIDVWNPAFDVTPAALIDGIITEVGVVEKDASGAFHLARIFE.

Asp267 serves as the catalytic Proton donor.

This sequence belongs to the eIF-2B alpha/beta/delta subunits family. MtnA subfamily.

The protein resides in the cytoplasm. The protein localises to the nucleus. The enzyme catalyses 5-(methylsulfanyl)-alpha-D-ribose 1-phosphate = 5-(methylsulfanyl)-D-ribulose 1-phosphate. The protein operates within amino-acid biosynthesis; L-methionine biosynthesis via salvage pathway; L-methionine from S-methyl-5-thio-alpha-D-ribose 1-phosphate: step 1/6. Functionally, catalyzes the interconversion of methylthioribose-1-phosphate (MTR-1-P) into methylthioribulose-1-phosphate (MTRu-1-P). The sequence is that of Methylthioribose-1-phosphate isomerase from Blastomyces gilchristii (strain SLH14081) (Blastomyces dermatitidis).